We begin with the raw amino-acid sequence, 139 residues long: MLIPKRTKYRKQHRPDRHGMSKGGNEINFGDFAIQALAPAYVTNRQIEAARIAMTRYIKRGGKVWITIFPDRPLTKHPLGARMGSGKGTPEFWIANVHPGRVMFEIGGVSEDVAREALRRAIDKLPMKCRVIAREGGDI.

Positions Met-1–Asp-16 are enriched in basic residues. The disordered stretch occupies residues Met-1–Gly-23.

The protein belongs to the universal ribosomal protein uL16 family. As to quaternary structure, part of the 50S ribosomal subunit.

In terms of biological role, binds 23S rRNA and is also seen to make contacts with the A and possibly P site tRNAs. This Bifidobacterium animalis subsp. lactis (strain AD011) protein is Large ribosomal subunit protein uL16.